The sequence spans 215 residues: 3-demethoxyubiquinol 3-hydroxylase (215 aa).

6 residues coordinate Fe cation: Glu64, Glu94, His97, Glu146, Glu178, and His181.

This sequence belongs to the COQ7 family. Fe cation serves as cofactor.

Its subcellular location is the cell membrane. The catalysed reaction is a 5-methoxy-2-methyl-3-(all-trans-polyprenyl)benzene-1,4-diol + AH2 + O2 = a 3-demethylubiquinol + A + H2O. It participates in cofactor biosynthesis; ubiquinone biosynthesis. Functionally, catalyzes the hydroxylation of 2-nonaprenyl-3-methyl-6-methoxy-1,4-benzoquinol during ubiquinone biosynthesis. This Pseudomonas paraeruginosa (strain DSM 24068 / PA7) (Pseudomonas aeruginosa (strain PA7)) protein is 3-demethoxyubiquinol 3-hydroxylase.